We begin with the raw amino-acid sequence, 238 residues long: 3-deoxy-manno-octulosonate cytidylyltransferase (238 aa).

This sequence belongs to the KdsB family.

It localises to the cytoplasm. The catalysed reaction is 3-deoxy-alpha-D-manno-oct-2-ulosonate + CTP = CMP-3-deoxy-beta-D-manno-octulosonate + diphosphate. Its pathway is nucleotide-sugar biosynthesis; CMP-3-deoxy-D-manno-octulosonate biosynthesis; CMP-3-deoxy-D-manno-octulosonate from 3-deoxy-D-manno-octulosonate and CTP: step 1/1. It functions in the pathway bacterial outer membrane biogenesis; lipopolysaccharide biosynthesis. In terms of biological role, activates KDO (a required 8-carbon sugar) for incorporation into bacterial lipopolysaccharide in Gram-negative bacteria. This Nitratiruptor sp. (strain SB155-2) protein is 3-deoxy-manno-octulosonate cytidylyltransferase.